The primary structure comprises 237 residues: Large ribosomal subunit protein bL25 (237 aa).

An N-terminal domain region spans residues 1–104 (MELTAKPRTP…SVPVHTTGRS (104 aa)). The tract at residues 105 to 189 (QGEVQGGLVD…ELEAEVQAAQ (85 aa)) is middle domain. A C-terminal domain region spans residues 190–237 (VAGLVAAGELSEEAAEAVLEGDASLEEVKAEASEDNAGTDSEDNSDAQ). Residues 205-237 (EAVLEGDASLEEVKAEASEDNAGTDSEDNSDAQ) form a disordered region.

The protein belongs to the bacterial ribosomal protein bL25 family. CTC subfamily. As to quaternary structure, part of the 50S ribosomal subunit. Contacts proteins L11 and L16, the A site tRNA, and the 5S and 23S rRNAs.

Functionally, this is one of 3 proteins that mediate the attachment of the 5S rRNA onto the large ribosomal subunit. This protein has three domains. The N-terminal one is bound on the solvent face, the middle domain fills the space between the 5S rRNA and the L11 arm contacting the 23S rRNA while the C-terminal domain is on the edge of the intersubunit interface and contacts the A site. The protein conformation changes upon binding of a tRNA mimic to the A site, although the mimic does not interact directly with CTC itself, consistent with CTCs presumed role in moderating A site binding. The polypeptide is Large ribosomal subunit protein bL25 (rplY) (Deinococcus radiodurans (strain ATCC 13939 / DSM 20539 / JCM 16871 / CCUG 27074 / LMG 4051 / NBRC 15346 / NCIMB 9279 / VKM B-1422 / R1)).